Here is a 211-residue protein sequence, read N- to C-terminus: Uracil phosphoribosyltransferase (211 aa).

5-phospho-alpha-D-ribose 1-diphosphate contacts are provided by residues R79, R104, and 131–139 (DPMLATGGS). Uracil-binding positions include I196 and 201 to 203 (GDA). D202 contacts 5-phospho-alpha-D-ribose 1-diphosphate.

Belongs to the UPRTase family. Mg(2+) serves as cofactor.

It catalyses the reaction UMP + diphosphate = 5-phospho-alpha-D-ribose 1-diphosphate + uracil. Its pathway is pyrimidine metabolism; UMP biosynthesis via salvage pathway; UMP from uracil: step 1/1. Allosterically activated by GTP. In terms of biological role, catalyzes the conversion of uracil and 5-phospho-alpha-D-ribose 1-diphosphate (PRPP) to UMP and diphosphate. The polypeptide is Uracil phosphoribosyltransferase (Limosilactobacillus fermentum (strain NBRC 3956 / LMG 18251) (Lactobacillus fermentum)).